Reading from the N-terminus, the 582-residue chain is DNA polymerase IV (582 aa).

Residues 127–161 are disordered; that stretch reads NADDGQSSTDKESEISTDVESERNDDSNNKDMIQA. Positions 135–155 are enriched in basic and acidic residues; sequence TDKESEISTDVESERNDDSNN. Positions 360–369 are involved in ssDNA binding; the sequence is RGYSKCGDID. Asp-367, Asp-369, and Asp-502 together coordinate Mg(2+).

Belongs to the DNA polymerase type-X family. As to quaternary structure, interacts with DNL4 subunit of the DNL4-LIF1 complex. The cofactor is Mg(2+).

It localises to the nucleus. It carries out the reaction DNA(n) + a 2'-deoxyribonucleoside 5'-triphosphate = DNA(n+1) + diphosphate. Its activity is regulated as follows. Stimulated by the interaction with the DNL4-LIF1 complex. Its function is as follows. Repair polymerase. Involved in gap-filling in DNA nonhomologous end joining (NHEJ) required for double-strand break repair. Seems to conduct DNA synthesis in a stepwise distributive fashion rather than in a processive fashion as for other DNA polymerases. Preferentially acts upon short gaps formed by the alignment of linear duplexes with complementary single-strand ends. Required for filling gaps that need removal of a 5'- or 3'-terminal mismatch, however lacks nuclease activities. This Saccharomyces cerevisiae (strain ATCC 204508 / S288c) (Baker's yeast) protein is DNA polymerase IV (POL4).